The primary structure comprises 113 residues: Large ribosomal subunit protein bL17 (113 aa).

The protein belongs to the bacterial ribosomal protein bL17 family. Part of the 50S ribosomal subunit. Contacts protein L32.

This Symbiobacterium thermophilum (strain DSM 24528 / JCM 14929 / IAM 14863 / T) protein is Large ribosomal subunit protein bL17.